Consider the following 244-residue polypeptide: Dihydropteridine reductase (244 aa).

Ala-2 carries the N-acetylalanine modification. NADP(+) is bound at residue 14 to 38; it reads LVYGGRGALGSRCVQAFRARNWWVA. Residues Lys-73, Lys-79, Lys-96, and Lys-102 each carry the N6-succinyllysine modification. Tyr-150 functions as the Proton acceptor in the catalytic mechanism.

The protein belongs to the short-chain dehydrogenases/reductases (SDR) family. As to quaternary structure, homodimer.

It carries out the reaction 5,6,7,8-tetrahydropteridine + NAD(+) = 6,7-dihydropteridine + NADH + H(+). The catalysed reaction is 5,6,7,8-tetrahydropteridine + NADP(+) = 6,7-dihydropteridine + NADPH + H(+). Catalyzes the conversion of quinonoid dihydrobiopterin into tetrahydrobiopterin. The chain is Dihydropteridine reductase (QDPR) from Homo sapiens (Human).